The chain runs to 193 residues: MAASDITVSGLNKVGAEDAAYLVSKIRTIPGFPKEGILFRDFMPVLADARAFGILMGALEAALPVDVDDFDMVVGLEARGFLFGPALAARLGKGFIAVRKAGKLPPETMSQSYDLEYGQASMEIETNVVHEGVRVLIVDDLIATGGTANAARSLIEKCGGVVAGFSFVMELTGIDGMKSLGDYPTSSLVCMPA.

The protein belongs to the purine/pyrimidine phosphoribosyltransferase family. In terms of assembly, homodimer.

The protein resides in the cytoplasm. The enzyme catalyses AMP + diphosphate = 5-phospho-alpha-D-ribose 1-diphosphate + adenine. It functions in the pathway purine metabolism; AMP biosynthesis via salvage pathway; AMP from adenine: step 1/1. Catalyzes a salvage reaction resulting in the formation of AMP, that is energically less costly than de novo synthesis. This Bifidobacterium adolescentis (strain ATCC 15703 / DSM 20083 / NCTC 11814 / E194a) protein is Adenine phosphoribosyltransferase.